Here is a 144-residue protein sequence, read N- to C-terminus: Antigenic protein SchS21 (144 aa).

N-linked (GlcNAc...) asparagine glycosylation is present at N36. An igE-binding epitope region spans residues 91 to 105 (VKQMWPAESRKPMSG).

As to quaternary structure, homodimer. Mg(2+) serves as cofactor.

Its subcellular location is the secreted. Has exodeoxyribonuclease activity with lambda-DNA and salmon testes dsDNA. No activity with circular plasmid DNA. The physiological role of this enzyme may be to degrade environmental DNA, and thus mobilize nitrogen for uptake. The chain is Antigenic protein SchS21 from Stachybotrys chartarum (Toxic black mold).